The sequence spans 256 residues: MKIITCYKCVPDEQDIAVNNADGSLDFSKADAKISQYDLNAIEAACQLKQQAAEAQVTALSVGGKALTNAKGRKDVLSRGPDELIVVIDDQFERALPQQTATALAAAAQKAGFDLILCGDGSSDLYAQQVGLLVGEILNIPAVNGVSKIISLTADTLTVERELEDETETLSIPLPAVVAVSTDINSPQIPSMKAILGAAKKPVQVWSAADIGFNAEAAWSEQQVAAPKQRERQRIVIEGDGEEQIAAFAENLRKVI.

It belongs to the ETF beta-subunit/FixA family. Heterodimer of FixA and FixB.

It functions in the pathway amine and polyamine metabolism; carnitine metabolism. Functionally, required for anaerobic carnitine reduction. May bring reductant to CaiA. This is Protein FixA from Escherichia coli O17:K52:H18 (strain UMN026 / ExPEC).